The primary structure comprises 357 residues: Uroporphyrinogen decarboxylase (357 aa).

Substrate is bound by residues R27 to R31, D77, Y154, S209, and H330.

The protein belongs to the uroporphyrinogen decarboxylase family. As to quaternary structure, homodimer.

The protein resides in the cytoplasm. The catalysed reaction is uroporphyrinogen III + 4 H(+) = coproporphyrinogen III + 4 CO2. Its pathway is porphyrin-containing compound metabolism; protoporphyrin-IX biosynthesis; coproporphyrinogen-III from 5-aminolevulinate: step 4/4. In terms of biological role, catalyzes the decarboxylation of four acetate groups of uroporphyrinogen-III to yield coproporphyrinogen-III. The sequence is that of Uroporphyrinogen decarboxylase from Acinetobacter baumannii (strain AB0057).